The primary structure comprises 284 residues: Tropomyosin Per a 7.0101 (284 aa).

Positions 22 to 266 (ALLCEQQARD…EDELVHEKEK (245 aa)) form a coiled coil.

It belongs to the tropomyosin family. In terms of assembly, homodimer.

Its function is as follows. Tropomyosin, in association with the troponin complex, plays a central role in the calcium dependent regulation of muscle contraction. The chain is Tropomyosin Per a 7.0101 from Periplaneta americana (American cockroach).